A 421-amino-acid chain; its full sequence is Anhydromevalonate phosphate decarboxylase (421 aa).

Asparagine 131 and glutamate 194 together coordinate Mn(2+). Aspartate 240 (proton acceptor) is an active-site residue.

This sequence belongs to the UbiD family. Prenylated FMN is required as a cofactor. Requires Mn(2+) as cofactor.

The catalysed reaction is (2E)-3-methyl-5-phosphooxypent-2-enoate + H(+) = isopentenyl phosphate + CO2. Its pathway is isoprenoid biosynthesis; isopentenyl diphosphate biosynthesis via mevalonate pathway. In terms of biological role, catalyzes the conversion of trans-anhydromevalonate 5-phosphate (tAHMP) into isopentenyl phosphate. Involved in the archaeal mevalonate (MVA) pathway, which provides fundamental precursors for isoprenoid biosynthesis, such as isopentenyl diphosphate (IPP) and dimethylallyl diphosphate (DMAPP). The polypeptide is Anhydromevalonate phosphate decarboxylase (Methanocaldococcus jannaschii (strain ATCC 43067 / DSM 2661 / JAL-1 / JCM 10045 / NBRC 100440) (Methanococcus jannaschii)).